A 645-amino-acid chain; its full sequence is 1,4-alpha-glucan branching enzyme GlgB (645 aa).

The active-site Nucleophile is D309. E352 (proton donor) is an active-site residue. The disordered stretch occupies residues 619–645; that stretch reads VKTRKGSKKQDGSKTKVRSNVTSRGKR. The segment covering 636 to 645 has biased composition (polar residues); that stretch reads RSNVTSRGKR.

Belongs to the glycosyl hydrolase 13 family. GlgB subfamily. In terms of assembly, monomer.

The catalysed reaction is Transfers a segment of a (1-&gt;4)-alpha-D-glucan chain to a primary hydroxy group in a similar glucan chain.. It participates in glycan biosynthesis; glycogen biosynthesis. In terms of biological role, catalyzes the formation of the alpha-1,6-glucosidic linkages in glycogen by scission of a 1,4-alpha-linked oligosaccharide from growing alpha-1,4-glucan chains and the subsequent attachment of the oligosaccharide to the alpha-1,6 position. This Bacillus cereus (strain ATCC 10987 / NRS 248) protein is 1,4-alpha-glucan branching enzyme GlgB.